The chain runs to 51 residues: MARYRRCRSQSRSRCCRPRRRCRRRRRQSCRARRRATRCCRRRYRLRCRRY.

It belongs to the protamine P1 family. As to expression, testis.

The protein localises to the nucleus. The protein resides in the chromosome. In terms of biological role, protamines substitute for histones in the chromatin of sperm during the haploid phase of spermatogenesis. They compact sperm DNA into a highly condensed, stable and inactive complex. The protein is Sperm protamine P1 (PRM1) of Trachypithecus johnii (Nilgiri langur).